The primary structure comprises 563 residues: Ataxin-10 homolog (563 aa).

Threonine 433 carries the phosphothreonine modification. The segment at 544-563 (VSKEEDPGNENSEIISIDED) is disordered. Phosphoserine is present on serine 559.

It belongs to the ataxin-10 family.

The protein resides in the cytoplasm. May play a role in the regulation of cytokinesis. The polypeptide is Ataxin-10 homolog (CTR86) (Saccharomyces cerevisiae (strain ATCC 204508 / S288c) (Baker's yeast)).